A 301-amino-acid polypeptide reads, in one-letter code: Diaminopimelate epimerase (301 aa).

Substrate contacts are provided by N15, Q47, and N67. The Proton donor role is filled by C76. Substrate contacts are provided by residues 77–78 (GN), N163, N197, and 215–216 (ER). The active-site Proton acceptor is C224. 225–226 (GS) is a binding site for substrate.

The protein belongs to the diaminopimelate epimerase family. In terms of assembly, homodimer.

It localises to the cytoplasm. It catalyses the reaction (2S,6S)-2,6-diaminopimelate = meso-2,6-diaminopimelate. It functions in the pathway amino-acid biosynthesis; L-lysine biosynthesis via DAP pathway; DL-2,6-diaminopimelate from LL-2,6-diaminopimelate: step 1/1. Its function is as follows. Catalyzes the stereoinversion of LL-2,6-diaminopimelate (L,L-DAP) to meso-diaminopimelate (meso-DAP), a precursor of L-lysine and an essential component of the bacterial peptidoglycan. This is Diaminopimelate epimerase from Rhizobium meliloti (strain 1021) (Ensifer meliloti).